A 409-amino-acid polypeptide reads, in one-letter code: Rho-GTPase-activating protein BAG7 (409 aa).

Residues 1–26 are compositionally biased toward polar residues; sequence MFNMNLLSTPSSEEGSPQNRSSSMSS. The segment at 1–32 is disordered; sequence MFNMNLLSTPSSEEGSPQNRSSSMSSVEGKKD. Positions 50–257 constitute a Rho-GAP domain; sequence VSLEESLKVA…FLILHASDII (208 aa). Residues 362-409 are disordered; it reads KLLGNVGNSSNTGIKDPTERVPRGEHKTKHKQRQSWLRRLTSPSRTQP. Residues 377–386 are compositionally biased toward basic and acidic residues; that stretch reads DPTERVPRGE.

As to quaternary structure, interacts with RHO1.

Its function is as follows. Acts in signal transduction. Activates RHO1. The protein is Rho-GTPase-activating protein BAG7 (BAG7) of Saccharomyces cerevisiae (strain ATCC 204508 / S288c) (Baker's yeast).